Here is a 153-residue protein sequence, read N- to C-terminus: Fucose mutarotase (153 aa).

The active-site Proton donor is His24. Asp32 is a substrate binding site. Asp69 is an active-site residue. Residues Met79, Tyr120, Tyr138, and Asn140 each contribute to the substrate site. Residue Tyr120 is part of the active site.

Belongs to the RbsD / FucU family. In terms of assembly, mainly homodimer, but also exists as homotetramer, homooctamer, and homodecamer. The homodimeric form seems catalytically inactive. Widely expressed in various tissues and cell lines, including kidney, liver, and pancreas, marginally in muscle and testis.

The enzyme catalyses alpha-L-fucose = beta-L-fucose. It participates in carbohydrate metabolism; L-fucose metabolism. In terms of biological role, involved in the interconversion between alpha- and beta-L-fucoses. L-Fucose (6-deoxy-L-galactose) exists as alpha-L-fucose (29.5%) and beta-L-fucose (70.5%), the beta-form is metabolized through the salvage pathway. GDP-L-fucose formed either by the de novo or salvage pathways is transported into the endoplasmic reticulum, where it serves as a substrate for N- and O-glycosylations by fucosyltransferases. Fucosylated structures expressed on cell surfaces or secreted in biological fluids are believed to play a critical role in cell-cell adhesion and recognition processes. This is Fucose mutarotase (Fuom) from Mus musculus (Mouse).